The sequence spans 172 residues: CD-NTase-associated protein 7 (172 aa).

The segment at 141 to 172 (AQSPGINGYLENDKTYSAGGRSLTRTSVRNFV) is required for binding to CdnC and to confer phage immunity.

It belongs to the bacterial HORMA family. HORMA1 subfamily. Forms complexes with CdnC with 1:1 and 2:2 stoichimetry, and a 1:1:6 CdnC:Cap7:Cap6 complex.

Functionally, sensor protein of a CBASS antivirus system. CBASS (cyclic oligonucleotide-based antiphage signaling system) provides immunity against bacteriophage. The CD-NTase protein synthesizes cyclic nucleotides in response to infection; these serve as specific second messenger signals. The signals activate a diverse range of effectors, leading to bacterial cell death and thus abortive phage infection. A type III-C(AAA) CBASS system. Binds to a closure peptide (consensus His-Xaa-Xaa-Ile-Leu-Leu-Thr), which allows it to activate CdnC for second messenger synthesis. Its function is as follows. Protects E.coli strain JP313 against bacteriophage lambda cI- infection. When the cdnC-cap7-cap6-nucC operon is transformed into a susceptible strain it confers bacteriophage immunity. Mutations in the sensor (Cap7 also called HORMA) or effector proteins (CdnC, NucC) but not the disassembly protein (Cap6 also called Trip13) no longer confer immunity. The presence of the intact operon leads to culture collapse and cell death, which occurs before the phage has finished its replication cycle, thus protecting non-infected bacteria by aborting the phage infection and preventing its propagation. This chain is CD-NTase-associated protein 7, found in Escherichia coli (strain MS 115-1).